A 254-amino-acid polypeptide reads, in one-letter code: MTAKTIDLNADLGESFGHYTMGNDSAMLDIVTSANVACGFHGGDPEVMAETFRIAREKGVSVGSHPGFPDLWGFGRRVMPFTPAQIERIVAYQIGAAQALATYSGHRMTYMKTHGALGNLTERDPAVAEAIVNAVKAVDANLPIMAIALSHLERIGRERGLTVFSEIFADRAYTEDGHLVSRKEPGAVLHDADFAAARAVRMVQNGAIETISGKMLPTRIDTICVHGDNAESVEVARKVRAGFEAAGIAVRALT.

Belongs to the LamB/PxpA family. In terms of assembly, forms a complex composed of PxpA, PxpB and PxpC.

It catalyses the reaction 5-oxo-L-proline + ATP + 2 H2O = L-glutamate + ADP + phosphate + H(+). Functionally, catalyzes the cleavage of 5-oxoproline to form L-glutamate coupled to the hydrolysis of ATP to ADP and inorganic phosphate. This Gluconobacter oxydans (strain 621H) (Gluconobacter suboxydans) protein is 5-oxoprolinase subunit A.